We begin with the raw amino-acid sequence, 524 residues long: Nif-specific regulatory protein (524 aa).

Residues 1–182 are a domain; the sequence is MIHKSDSDTT…AQTIRLMILP (182 aa). Residues 35–176 enclose the GAF domain; that stretch reads EASKTLQEVL…TVANLIAQTI (142 aa). The Sigma-54 factor interaction domain maps to 212–481; sequence MVGKSPAMRQ…DGWLDNSLDE (270 aa). Residues 240-247 and 303-312 each bind ATP; these read GESGTGKE and ADGGTLFLDE. Residues 482-524 are C-terminal DNA-binding domain; the sequence is RQRLIAALEKAGWVQAKAARLLGMTPRQVAYRIQIMDITMPRL. Positions 496-515 form a DNA-binding region, H-T-H motif; that stretch reads QAKAARLLGMTPRQVAYRIQ.

As to quaternary structure, interacts with sigma-54.

In terms of biological role, required for activation of most nif operons, which are directly involved in nitrogen fixation. The chain is Nif-specific regulatory protein (nifA) from Klebsiella oxytoca.